The primary structure comprises 206 residues: MARYLGPKLKLSRREGTDLFLKSGVRAIESKCKIDTAPGQHGARKPRLSDYGSQLREKQKVRRIYGILERQFRNYYKEANRLKGNTGENLLVLLEGRLDNVVYRMGFAATRAEARQLVSHKAIVVNGRVVNIPSFQVSVNDVVAVREKSKKQARIKASLELAEQREKPTWLEVDAAKMEGVFKRVPERSDLSADINEHLIVELYSK.

The S4 RNA-binding domain occupies 96 to 156 (GRLDNVVYRM…EKSKKQARIK (61 aa)).

It belongs to the universal ribosomal protein uS4 family. As to quaternary structure, part of the 30S ribosomal subunit. Contacts protein S5. The interaction surface between S4 and S5 is involved in control of translational fidelity.

In terms of biological role, one of the primary rRNA binding proteins, it binds directly to 16S rRNA where it nucleates assembly of the body of the 30S subunit. Functionally, with S5 and S12 plays an important role in translational accuracy. The chain is Small ribosomal subunit protein uS4 from Pasteurella multocida (strain Pm70).